A 380-amino-acid polypeptide reads, in one-letter code: Tetraacyldisaccharide 4'-kinase (380 aa).

An ATP-binding site is contributed by 51 to 58 (SVGGTGKT).

The protein belongs to the LpxK family.

The enzyme catalyses a lipid A disaccharide + ATP = a lipid IVA + ADP + H(+). It functions in the pathway glycolipid biosynthesis; lipid IV(A) biosynthesis; lipid IV(A) from (3R)-3-hydroxytetradecanoyl-[acyl-carrier-protein] and UDP-N-acetyl-alpha-D-glucosamine: step 6/6. Functionally, transfers the gamma-phosphate of ATP to the 4'-position of a tetraacyldisaccharide 1-phosphate intermediate (termed DS-1-P) to form tetraacyldisaccharide 1,4'-bis-phosphate (lipid IVA). The protein is Tetraacyldisaccharide 4'-kinase of Bacteroides thetaiotaomicron (strain ATCC 29148 / DSM 2079 / JCM 5827 / CCUG 10774 / NCTC 10582 / VPI-5482 / E50).